The following is a 281-amino-acid chain: Acetyl-coenzyme A carboxylase carboxyl transferase subunit beta 2 (281 aa).

Positions 26–281 (LLTRCPVCHE…TITQGGHQDV (256 aa)) constitute a CoA carboxyltransferase N-terminal domain. Residues C30, C33, C48, and C51 each contribute to the Zn(2+) site. Residues 30 to 51 (CPVCHEDCYTQDLGEFKVCPHC) form a C4-type zinc finger.

This sequence belongs to the AccD/PCCB family. Acetyl-CoA carboxylase is a heterohexamer composed of biotin carboxyl carrier protein (AccB), biotin carboxylase (AccC) and two subunits each of ACCase subunit alpha (AccA) and ACCase subunit beta (AccD). Requires Zn(2+) as cofactor.

It localises to the cytoplasm. It carries out the reaction N(6)-carboxybiotinyl-L-lysyl-[protein] + acetyl-CoA = N(6)-biotinyl-L-lysyl-[protein] + malonyl-CoA. It functions in the pathway lipid metabolism; malonyl-CoA biosynthesis; malonyl-CoA from acetyl-CoA: step 1/1. Component of the acetyl coenzyme A carboxylase (ACC) complex. Biotin carboxylase (BC) catalyzes the carboxylation of biotin on its carrier protein (BCCP) and then the CO(2) group is transferred by the transcarboxylase to acetyl-CoA to form malonyl-CoA. This chain is Acetyl-coenzyme A carboxylase carboxyl transferase subunit beta 2, found in Lactiplantibacillus plantarum (strain JDM1) (Lactobacillus plantarum).